The chain runs to 78 residues: Large ribosomal subunit protein bL28 (78 aa).

Belongs to the bacterial ribosomal protein bL28 family.

The protein is Large ribosomal subunit protein bL28 of Gloeothece citriformis (strain PCC 7424) (Cyanothece sp. (strain PCC 7424)).